A 597-amino-acid chain; its full sequence is Aspartate--tRNA(Asp/Asn) ligase (597 aa).

Glu175 lines the L-aspartate pocket. Positions 199–202 (QLFK) are aspartate. Arg221 serves as a coordination point for L-aspartate. Residues 221–223 (RDE) and Gln230 each bind ATP. L-aspartate is bound at residue His453. Residue Glu487 participates in ATP binding. Residue Arg494 coordinates L-aspartate. Position 539–542 (539–542 (GWDR)) interacts with ATP. The segment at 562–597 (SGGGVDPLTDAPAPITPEQRKESGIDAKPKKKETKN) is disordered. The segment covering 579-589 (EQRKESGIDAK) has biased composition (basic and acidic residues).

The protein belongs to the class-II aminoacyl-tRNA synthetase family. Type 1 subfamily. Homodimer.

It localises to the cytoplasm. It catalyses the reaction tRNA(Asx) + L-aspartate + ATP = L-aspartyl-tRNA(Asx) + AMP + diphosphate. Aspartyl-tRNA synthetase with relaxed tRNA specificity since it is able to aspartylate not only its cognate tRNA(Asp) but also tRNA(Asn). Reaction proceeds in two steps: L-aspartate is first activated by ATP to form Asp-AMP and then transferred to the acceptor end of tRNA(Asp/Asn). The polypeptide is Aspartate--tRNA(Asp/Asn) ligase (Corynebacterium kroppenstedtii (strain DSM 44385 / JCM 11950 / CIP 105744 / CCUG 35717)).